The chain runs to 473 residues: Ras-GEF domain-containing family member 1B (473 aa).

One can recognise an N-terminal Ras-GEF domain in the interval 34-164 (HDNNLLSGSL…QMMQCLIRKL (131 aa)). The Ras-GEF domain occupies 204-452 (NDPYTLAQQL…LYLASYESEG (249 aa)).

As to quaternary structure, interacts with Ras family proteins. Interacts with CCDC124 during cytokinesis.

The protein localises to the early endosome. Its subcellular location is the late endosome. It is found in the midbody. Its function is as follows. Guanine nucleotide exchange factor (GEF) with specificity for RAP2A, it doesn't seems to activate other Ras family proteins (in vitro). The polypeptide is Ras-GEF domain-containing family member 1B (RASGEF1B) (Homo sapiens (Human)).